Reading from the N-terminus, the 361-residue chain is S-adenosylmethionine decarboxylase proenzyme (361 aa).

Catalysis depends on residues glutamate 11 and glutamate 14. Catalysis depends on serine 71, which acts as the Schiff-base intermediate with substrate; via pyruvic acid. Position 71 is a pyruvic acid (Ser); by autocatalysis (serine 71). Catalysis depends on cysteine 85, which acts as the Proton donor; for catalytic activity. Catalysis depends on proton acceptor; for processing activity residues serine 234 and histidine 247.

This sequence belongs to the eukaryotic AdoMetDC family. Pyruvate is required as a cofactor. Post-translationally, is synthesized initially as an inactive proenzyme. Formation of the active enzyme involves a self-maturation process in which the active site pyruvoyl group is generated from an internal serine residue via an autocatalytic post-translational modification. Two non-identical subunits are generated from the proenzyme in this reaction, and the pyruvate is formed at the N-terminus of the alpha chain, which is derived from the carboxyl end of the proenzyme. The post-translation cleavage follows an unusual pathway, termed non-hydrolytic serinolysis, in which the side chain hydroxyl group of the serine supplies its oxygen atom to form the C-terminus of the beta chain, while the remainder of the serine residue undergoes an oxidative deamination to produce ammonia and the pyruvoyl group blocking the N-terminus of the alpha chain.

The catalysed reaction is S-adenosyl-L-methionine + H(+) = S-adenosyl 3-(methylsulfanyl)propylamine + CO2. Its pathway is amine and polyamine biosynthesis; S-adenosylmethioninamine biosynthesis; S-adenosylmethioninamine from S-adenosyl-L-methionine: step 1/1. The protein is S-adenosylmethionine decarboxylase proenzyme (SAMDC) of Daucus carota (Wild carrot).